The chain runs to 158 residues: Transcription elongation factor GreA (158 aa).

The stretch at 3–75 (TEKTYPMTQE…TQLENMIRNA (73 aa)) forms a coiled coil.

This sequence belongs to the GreA/GreB family.

Its function is as follows. Necessary for efficient RNA polymerase transcription elongation past template-encoded arresting sites. The arresting sites in DNA have the property of trapping a certain fraction of elongating RNA polymerases that pass through, resulting in locked ternary complexes. Cleavage of the nascent transcript by cleavage factors such as GreA or GreB allows the resumption of elongation from the new 3'terminus. GreA releases sequences of 2 to 3 nucleotides. The polypeptide is Transcription elongation factor GreA (Bacillus cereus (strain ATCC 14579 / DSM 31 / CCUG 7414 / JCM 2152 / NBRC 15305 / NCIMB 9373 / NCTC 2599 / NRRL B-3711)).